A 509-amino-acid chain; its full sequence is Heat shock 70 kDa protein 14 (509 aa).

It belongs to the heat shock protein 70 family. Component of ribosome-associated complex (RAC), a heterodimer composed of Hsp70/DnaK-type chaperone HSPA14 and Hsp40/DnaJ-type chaperone DNAJC2.

It is found in the cytoplasm. The protein resides in the cytosol. Component of the ribosome-associated complex (RAC), a complex involved in folding or maintaining nascent polypeptides in a folding-competent state. In the RAC complex, binds to the nascent polypeptide chain, while DNAJC2 stimulates its ATPase activity. In Mus musculus (Mouse), this protein is Heat shock 70 kDa protein 14 (Hspa14).